A 64-amino-acid polypeptide reads, in one-letter code: SPbeta prophage-derived uncharacterized protein YonP (64 aa).

In Bacillus subtilis (strain 168), this protein is SPbeta prophage-derived uncharacterized protein YonP (yonP).